We begin with the raw amino-acid sequence, 194 residues long: Flagellar transcriptional regulator FlhC (194 aa).

Cys139, Cys142, Cys159, and Cys162 together coordinate Zn(2+).

This sequence belongs to the FlhC family. In terms of assembly, heterohexamer composed of two FlhC and four FlhD subunits. Each FlhC binds a FlhD dimer, forming a heterotrimer, and a hexamer assembles by dimerization of two heterotrimers. Zn(2+) is required as a cofactor.

The protein localises to the cytoplasm. In terms of biological role, functions in complex with FlhD as a master transcriptional regulator that regulates transcription of several flagellar and non-flagellar operons by binding to their promoter region. Activates expression of class 2 flagellar genes, including fliA, which is a flagellum-specific sigma factor that turns on the class 3 genes. Also regulates genes whose products function in a variety of physiological pathways. The polypeptide is Flagellar transcriptional regulator FlhC (Serratia marcescens).